An 854-amino-acid chain; its full sequence is Protein translocase subunit SecA (854 aa).

Residues Q81, G99–T103, and D487 each bind ATP.

Belongs to the SecA family. As to quaternary structure, monomer and homodimer. Part of the essential Sec protein translocation apparatus which comprises SecA, SecYEG and auxiliary proteins SecDF. Other proteins may also be involved.

It is found in the cell membrane. The protein resides in the cytoplasm. It catalyses the reaction ATP + H2O + cellular proteinSide 1 = ADP + phosphate + cellular proteinSide 2.. Part of the Sec protein translocase complex. Interacts with the SecYEG preprotein conducting channel. Has a central role in coupling the hydrolysis of ATP to the transfer of proteins into and across the cell membrane, serving as an ATP-driven molecular motor driving the stepwise translocation of polypeptide chains across the membrane. The sequence is that of Protein translocase subunit SecA from Mycoplasma mobile (strain ATCC 43663 / 163K / NCTC 11711) (Mesomycoplasma mobile).